The primary structure comprises 445 residues: UDP-N-acetylmuramoylalanine--D-glutamate ligase (445 aa).

ATP is bound at residue 118–124 (GTNGKTT).

The protein belongs to the MurCDEF family.

The protein resides in the cytoplasm. The catalysed reaction is UDP-N-acetyl-alpha-D-muramoyl-L-alanine + D-glutamate + ATP = UDP-N-acetyl-alpha-D-muramoyl-L-alanyl-D-glutamate + ADP + phosphate + H(+). It functions in the pathway cell wall biogenesis; peptidoglycan biosynthesis. In terms of biological role, cell wall formation. Catalyzes the addition of glutamate to the nucleotide precursor UDP-N-acetylmuramoyl-L-alanine (UMA). In Macrococcus caseolyticus (strain JCSC5402) (Macrococcoides caseolyticum), this protein is UDP-N-acetylmuramoylalanine--D-glutamate ligase.